A 620-amino-acid chain; its full sequence is Membralin (620 aa).

The disordered stretch occupies residues 1-33; that stretch reads MSEHVEPAAPGPGPNGGGGGPAPARGPRTPNLN. Serine 2 bears the N-acetylserine mark. Positions 22 to 31 are enriched in low complexity; sequence APARGPRTPN. At threonine 29 the chain carries Phosphothreonine. A helical transmembrane segment spans residues 70 to 90; that stretch reads FFVLLKALFVLFVLAYIHIVF. The N-linked (GlcNAc...) asparagine glycan is linked to asparagine 189. Transmembrane regions (helical) follow at residues 302-322, 346-366, and 426-446; these read TSYL…SMLL, IAFP…MEAI, and YSSL…IYFF. Disordered regions lie at residues 474–517 and 568–620; these read TPTA…GPVA and SPLG…EVGS. 2 stretches are compositionally biased toward low complexity: residues 499 to 517 and 568 to 593; these read PPAL…GPVA and SPLG…AASD.

It belongs to the membralin family. In terms of assembly, interacts with ERLIN2.

The protein localises to the endoplasmic reticulum membrane. Its function is as follows. May have a role in the ERAD pathway required for clearance of misfolded proteins in the endoplasmic reticulum (ER). Promotes survival of motor neurons, probably by protecting against ER stress. This is Membralin (TMEM259) from Homo sapiens (Human).